Here is a 119-residue protein sequence, read N- to C-terminus: Large ribosomal subunit protein uL24 (119 aa).

It belongs to the universal ribosomal protein uL24 family. In terms of assembly, part of the 50S ribosomal subunit.

Its function is as follows. One of two assembly initiator proteins, it binds directly to the 5'-end of the 23S rRNA, where it nucleates assembly of the 50S subunit. Located at the polypeptide exit tunnel on the outside of the subunit. This is Large ribosomal subunit protein uL24 from Methanosarcina acetivorans (strain ATCC 35395 / DSM 2834 / JCM 12185 / C2A).